Here is a 242-residue protein sequence, read N- to C-terminus: Demethylmenaquinone methyltransferase (242 aa).

The S-adenosyl-L-methionine site is built by T74 and D93.

This sequence belongs to the class I-like SAM-binding methyltransferase superfamily. MenG/UbiE family.

It carries out the reaction a 2-demethylmenaquinol + S-adenosyl-L-methionine = a menaquinol + S-adenosyl-L-homocysteine + H(+). It participates in quinol/quinone metabolism; menaquinone biosynthesis; menaquinol from 1,4-dihydroxy-2-naphthoate: step 2/2. Functionally, methyltransferase required for the conversion of demethylmenaquinol (DMKH2) to menaquinol (MKH2). This Chlorobaculum tepidum (strain ATCC 49652 / DSM 12025 / NBRC 103806 / TLS) (Chlorobium tepidum) protein is Demethylmenaquinone methyltransferase.